A 364-amino-acid chain; its full sequence is DNA replication and repair protein RecF (364 aa).

Residue 30–37 (GNNAQGKT) participates in ATP binding.

It belongs to the RecF family.

The protein resides in the cytoplasm. Its function is as follows. The RecF protein is involved in DNA metabolism; it is required for DNA replication and normal SOS inducibility. RecF binds preferentially to single-stranded, linear DNA. It also seems to bind ATP. This Clostridium botulinum (strain Loch Maree / Type A3) protein is DNA replication and repair protein RecF.